A 100-amino-acid chain; its full sequence is Probable antitoxin MazE1 (100 aa).

The disordered stretch occupies residues 77–100 (PYESEAERSAARARRNARQQRSAQ).

As to quaternary structure, forms a complex with cognate toxin MazF1.

In terms of biological role, probable antitoxin component of a type II toxin-antitoxin (TA) system. Labile antitoxin that binds to cognate MazF1 toxin and counteracts its endoribonuclease activity. The chain is Probable antitoxin MazE1 (mazE1) from Mycobacterium bovis (strain ATCC BAA-935 / AF2122/97).